A 92-amino-acid polypeptide reads, in one-letter code: Progonadoliberin-1 (92 aa).

A signal peptide spans 1 to 23 (MEKSRKILVGVLLFTASVAICLA). At Gln24 the chain carries Pyrrolidone carboxylic acid. Glycine amide is present on Gly33.

It belongs to the GnRH family.

The protein resides in the secreted. Functionally, stimulates the secretion of gonadotropins. In Gallus gallus (Chicken), this protein is Progonadoliberin-1 (GNRH1).